Reading from the N-terminus, the 144-residue chain is Nucleoside diphosphate kinase (144 aa).

ATP-binding residues include lysine 11, phenylalanine 59, arginine 87, threonine 93, arginine 104, and asparagine 114. Residue histidine 117 is the Pros-phosphohistidine intermediate of the active site.

It belongs to the NDK family. In terms of assembly, homotetramer. It depends on Mg(2+) as a cofactor.

The protein localises to the cytoplasm. The enzyme catalyses a 2'-deoxyribonucleoside 5'-diphosphate + ATP = a 2'-deoxyribonucleoside 5'-triphosphate + ADP. The catalysed reaction is a ribonucleoside 5'-diphosphate + ATP = a ribonucleoside 5'-triphosphate + ADP. Its function is as follows. Major role in the synthesis of nucleoside triphosphates other than ATP. The ATP gamma phosphate is transferred to the NDP beta phosphate via a ping-pong mechanism, using a phosphorylated active-site intermediate. In Sorangium cellulosum (strain So ce56) (Polyangium cellulosum (strain So ce56)), this protein is Nucleoside diphosphate kinase.